A 379-amino-acid polypeptide reads, in one-letter code: Caffeyl-CoA reductase-Etf complex subunit CarC (379 aa).

Residues Phe122 to Ser131 and Phe155 to Thr157 contribute to the FAD site. Ser131 serves as a coordination point for substrate. Position 239 to 242 (Asp239 to Arg242) interacts with substrate. FAD contacts are provided by residues Arg267, Gln278, and Gln335–Gly339. The Proton acceptor role is filled by Glu362. Gly363 provides a ligand contact to substrate. Thr364 to Gln366 lines the FAD pocket.

The protein belongs to the acyl-CoA dehydrogenase family. Part of the homotrimeric caffeyl-CoA reductase-Etf complex composed of (R)-2-hydroxyisocaproyl-CoA dehydratase CarC, and the electron transfer flavoprotein (ETF) alpha (CarE) and beta (CarD) subunits. FAD serves as cofactor.

The protein resides in the cytoplasm. The catalysed reaction is hydrocaffeoyl-CoA + 2 reduced [2Fe-2S]-[ferredoxin] + 2 NAD(+) = (E)-caffeoyl-CoA + 2 oxidized [2Fe-2S]-[ferredoxin] + 2 NADH. Its function is as follows. The Caffeyl-CoA reductase-Etf complex catalyzes the reduction of caffeyl-CoA to yield hydrocaffeyl-CoA. It couples the endergonic ferredoxin reduction with NADH as reductant to the exergonic reduction of caffeoyl-CoA with the same reductant. It uses the mechanism of electron bifurcation to overcome the steep energy barrier in ferredoxin reduction. Also reduces 4-coumaroyl-CoA and feruloyl-CoA. The polypeptide is Caffeyl-CoA reductase-Etf complex subunit CarC (Acetobacterium woodii (strain ATCC 29683 / DSM 1030 / JCM 2381 / KCTC 1655 / WB1)).